Here is a 479-residue protein sequence, read N- to C-terminus: MPRTSLLTLACALATGASAFSYGAAIPQSTQEKQFSQEFRDGYSILKHYGGNGPYSERVSYGIARDPPTGCEVDQVIMVKRHGERYPSPSAGKSIEEALAKVYSINTTEYKGDLAFLNDWTYYVPNECYYNAETTSGPYAGLLDAYNHGNDYKARYGHLWNGETVVPFFSSGYGRVIETARKFGEGFFGYNYSTNAALNIISESEVMGADSLTPTCDTDNDQTTCDNLTYQLPQFKVAAARLNSQNPGMNLTASDVYNLIVMASFELNARPFSNWINAFTQDEWVSFGYVEDLNYYYCAGPGDKNMAAVGAVYANASLTLLNQGPKEAGPLFFNFAHDTNITPILAALGVLIPNEDLPLDRVAFGNPYSIGNIVPMGGHLTIERLSCQATALSDKGTYVRLVLNEAVLPFNDCTSGPGYSCPLANYTSILNKNLPDYTTTCNVSASYPQYLSFWWNYNTTTELNYRSSPIACQEGDAMD.

A signal peptide spans 1–19 (MPRTSLLTLACALATGASA). H82 acts as the Nucleophile in catalysis. Residues N106, N191, N227, N250, and N315 are each glycosylated (N-linked (GlcNAc...) asparagine). Residue D338 is the Proton donor of the active site. 3 N-linked (GlcNAc...) asparagine glycosylation sites follow: N425, N442, and N458.

This sequence belongs to the histidine acid phosphatase family.

The catalysed reaction is 1D-myo-inositol hexakisphosphate + H2O = 1D-myo-inositol 1,2,4,5,6-pentakisphosphate + phosphate. Its function is as follows. Catalyzes the hydrolysis of inorganic orthophosphate from phytate. The polypeptide is 3-phytase B (phyB) (Aspergillus niger).